A 287-amino-acid polypeptide reads, in one-letter code: NADH-cytochrome b5 reductase 1 (287 aa).

A helical transmembrane segment spans residues 5–25; sequence FEALVTALVLAVSFIFIYGKF. The FAD-binding FR-type domain maps to 41 to 145; that stretch reads KDWQEFSLLT…RGPKGFYHYE (105 aa). FAD is bound by residues 125–142 and 151–183; these read AELA…KGFY and EIGM…RVCL.

This sequence belongs to the flavoprotein pyridine nucleotide cytochrome reductase family. Monomer. Component of the 2-(3-amino-3-carboxypropyl)histidine synthase complex composed of DPH1, DPH2, DPH3 and a NADH-dependent reductase, predominantly CBR1. It depends on FAD as a cofactor.

The protein localises to the mitochondrion outer membrane. It catalyses the reaction 2 Fe(III)-[cytochrome b5] + NADH = 2 Fe(II)-[cytochrome b5] + NAD(+) + H(+). The catalysed reaction is 2 Fe(3+)-[Dph3] + NADH = 2 Fe(2+)-[Dph3] + NAD(+) + H(+). It participates in protein modification; peptidyl-diphthamide biosynthesis. In terms of biological role, NADH-dependent reductase for DPH3 and cytochrome b5. Required for the first step of diphthamide biosynthesis, a post-translational modification of histidine which occurs in elongation factor 2. DPH1 and DPH2 transfer a 3-amino-3-carboxypropyl (ACP) group from S-adenosyl-L-methionine (SAM) to a histidine residue, the reaction is assisted by a reduction system comprising DPH3 and a NADH-dependent reductase, predominantly CBR1. By reducing DPH3, also involved in the formation of the tRNA wobble base modification mcm5s 2U (5-methoxycarbonylmethyl-2-thiouridine), mediated by the elongator complex. The cytochrome b5/NADH cytochrome b5 reductase electron transfer system supports the catalytic activity of several sterol biosynthetic enzymes. The chain is NADH-cytochrome b5 reductase 1 (CBR1) from Eremothecium gossypii (strain ATCC 10895 / CBS 109.51 / FGSC 9923 / NRRL Y-1056) (Yeast).